Reading from the N-terminus, the 179-residue chain is Peptidyl-tRNA hydrolase (179 aa).

A tRNA-binding site is contributed by tyrosine 14. Histidine 19 serves as the catalytic Proton acceptor. TRNA is bound by residues tyrosine 60, asparagine 62, and asparagine 108.

The protein belongs to the PTH family. In terms of assembly, monomer.

It is found in the cytoplasm. It carries out the reaction an N-acyl-L-alpha-aminoacyl-tRNA + H2O = an N-acyl-L-amino acid + a tRNA + H(+). Functionally, hydrolyzes ribosome-free peptidyl-tRNAs (with 1 or more amino acids incorporated), which drop off the ribosome during protein synthesis, or as a result of ribosome stalling. Its function is as follows. Catalyzes the release of premature peptidyl moieties from peptidyl-tRNA molecules trapped in stalled 50S ribosomal subunits, and thus maintains levels of free tRNAs and 50S ribosomes. The sequence is that of Peptidyl-tRNA hydrolase from Mycoplasma mobile (strain ATCC 43663 / 163K / NCTC 11711) (Mesomycoplasma mobile).